The chain runs to 80 residues: Small ribosomal subunit protein uS17 (80 aa).

Belongs to the universal ribosomal protein uS17 family. In terms of assembly, part of the 30S ribosomal subunit.

Functionally, one of the primary rRNA binding proteins, it binds specifically to the 5'-end of 16S ribosomal RNA. This chain is Small ribosomal subunit protein uS17, found in Brucella abortus (strain S19).